Reading from the N-terminus, the 182-residue chain is Adenine phosphoribosyltransferase (182 aa).

It belongs to the purine/pyrimidine phosphoribosyltransferase family. As to quaternary structure, homodimer.

The protein localises to the cytoplasm. The catalysed reaction is AMP + diphosphate = 5-phospho-alpha-D-ribose 1-diphosphate + adenine. It functions in the pathway purine metabolism; AMP biosynthesis via salvage pathway; AMP from adenine: step 1/1. In terms of biological role, catalyzes a salvage reaction resulting in the formation of AMP, that is energically less costly than de novo synthesis. The protein is Adenine phosphoribosyltransferase of Pseudomonas syringae pv. tomato (strain ATCC BAA-871 / DC3000).